We begin with the raw amino-acid sequence, 152 residues long: Deoxyuridine 5'-triphosphate nucleotidohydrolase (152 aa).

Residues 70–72, N83, 87–89, and M97 each bind substrate; these read RSG and LID.

It belongs to the dUTPase family. Mg(2+) serves as cofactor.

It catalyses the reaction dUTP + H2O = dUMP + diphosphate + H(+). Its pathway is pyrimidine metabolism; dUMP biosynthesis; dUMP from dCTP (dUTP route): step 2/2. Functionally, this enzyme is involved in nucleotide metabolism: it produces dUMP, the immediate precursor of thymidine nucleotides and it decreases the intracellular concentration of dUTP so that uracil cannot be incorporated into DNA. This Buchnera aphidicola subsp. Baizongia pistaciae (strain Bp) protein is Deoxyuridine 5'-triphosphate nucleotidohydrolase.